The following is a 79-amino-acid chain: Dolichyl-diphosphooligosaccharide--protein glycosyltransferase subunit TMEM258 (79 aa).

2 helical membrane-spanning segments follow: residues 19-39 and 55-75; these read PLLTTFLCGVGLLLLATFTMI and FIAATSSVFLGFGSVFLLLWV.

Belongs to the OST5 family. Component of the oligosaccharyltransferase (OST) complex.

It localises to the membrane. It functions in the pathway protein modification; protein glycosylation. Functionally, subunit of the oligosaccharyl transferase (OST) complex that catalyzes the initial transfer of a defined glycan (Glc(3)Man(9)GlcNAc(2) in eukaryotes) from the lipid carrier dolichol-pyrophosphate to an asparagine residue within an Asn-X-Ser/Thr consensus motif in nascent polypeptide chains, the first step in protein N-glycosylation. N-glycosylation occurs cotranslationally and the complex associates with the Sec61 complex at the channel-forming translocon complex that mediates protein translocation across the endoplasmic reticulum (ER). All subunits are required for a maximal enzyme activity. The protein is Dolichyl-diphosphooligosaccharide--protein glycosyltransferase subunit TMEM258 of Caenorhabditis elegans.